The sequence spans 844 residues: Beta-mannosidase B (844 aa).

Glu432 (proton donor) is an active-site residue. Asn723 is a glycosylation site (N-linked (GlcNAc...) asparagine).

The protein belongs to the glycosyl hydrolase 2 family. Beta-mannosidase B subfamily.

The enzyme catalyses Hydrolysis of terminal, non-reducing beta-D-mannose residues in beta-D-mannosides.. Its pathway is glycan metabolism; N-glycan degradation. Functionally, exoglycosidase that cleaves the single beta-linked mannose residue from the non-reducing end of beta-mannosidic oligosaccharides of various complexity and length. Prefers mannobiose over mannotriose and has no activity against polymeric mannan. Is also severely restricted by galactosyl substitutions at the +1 subsite. In Aspergillus flavus (strain ATCC 200026 / FGSC A1120 / IAM 13836 / NRRL 3357 / JCM 12722 / SRRC 167), this protein is Beta-mannosidase B (mndB).